The following is a 138-amino-acid chain: Augmin complex subunit msd1 (138 aa).

Component of the augmin complex composed of dgt2, dgt3, dgt4, dgt5, dgt6, msd1, msd5 and wac. The complex interacts directly or indirectly with microtubules and is required for centrosome-independent generation of spindle microtubules.

Its subcellular location is the cytoplasm. The protein localises to the cytoskeleton. It is found in the spindle. As part of the augmin complex, plays a role in centrosome-independent generation of spindle microtubules. The complex is required for mitotic spindle assembly through its involvement in localizing gamma-tubulin to spindle microtubules. msd1 is required for microtubule nucleation from within the mitotic spindle and for localization of Grip71 to centrosomes and mitotic spindle. In Drosophila melanogaster (Fruit fly), this protein is Augmin complex subunit msd1.